A 250-amino-acid polypeptide reads, in one-letter code: Cell division protein FtsQ (250 aa).

At 1 to 11 (MWNNVRQLNLA) the chain is on the cytoplasmic side. A helical membrane pass occupies residues 12-32 (ASALYALLLLVLAAAGCYWLI). At 33-250 (QRPAFALREI…FLTDTDKGKK (218 aa)) the chain is on the periplasmic side. The region spanning 37-106 (FALREIRIDG…NALAVTLEEY (70 aa)) is the POTRA domain.

Belongs to the FtsQ/DivIB family. FtsQ subfamily. In terms of assembly, part of a complex composed of FtsB, FtsL and FtsQ.

Its subcellular location is the cell inner membrane. Its function is as follows. Essential cell division protein. May link together the upstream cell division proteins, which are predominantly cytoplasmic, with the downstream cell division proteins, which are predominantly periplasmic. May control correct divisome assembly. This chain is Cell division protein FtsQ, found in Burkholderia pseudomallei (strain K96243).